The following is a 317-amino-acid chain: Neuroguidin-A (317 aa).

Disordered stretches follow at residues 125–170 and 280–317; these read ENDP…SKVK and SALT…RRRH. A compositionally biased stretch (acidic residues) spans 146-157; it reads DERESDSGEEGA. Basic residues predominate over residues 297–317; that stretch reads KKSKKGPKKSKKKKGFSRRRH.

This sequence belongs to the SAS10 family. In terms of assembly, part of the small subunit (SSU) processome, composed of more than 70 proteins and the RNA chaperone small nucleolar RNA (snoRNA) U3.

The protein resides in the nucleus. Its subcellular location is the nucleolus. It localises to the chromosome. It is found in the centromere. The protein localises to the cytoplasm. The protein resides in the cell projection. Its subcellular location is the axon. It localises to the dendrite. It is found in the filopodium. Part of the small subunit (SSU) processome, first precursor of the small eukaryotic ribosomal subunit. During the assembly of the SSU processome in the nucleolus, many ribosome biogenesis factors, an RNA chaperone and ribosomal proteins associate with the nascent pre-rRNA and work in concert to generate RNA folding, modifications, rearrangements and cleavage as well as targeted degradation of pre-ribosomal RNA by the RNA exosome. Its dissociation from the complex determines the transition from state pre-A1 to state pre-A1*. May inhibit mRNA translation. This chain is Neuroguidin-A (ngdn-a), found in Xenopus laevis (African clawed frog).